Here is a 145-residue protein sequence, read N- to C-terminus: Ribonuclease H (145 aa).

The RNase H type-1 domain occupies 1–141 (MQEVIIYSDG…ADALANRGVA (141 aa)). Mg(2+) contacts are provided by Asp-9, Glu-47, Asp-69, and Asp-133.

Belongs to the RNase H family. Monomer. Requires Mg(2+) as cofactor.

It localises to the cytoplasm. The enzyme catalyses Endonucleolytic cleavage to 5'-phosphomonoester.. Functionally, endonuclease that specifically degrades the RNA of RNA-DNA hybrids. The protein is Ribonuclease H of Cupriavidus pinatubonensis (strain JMP 134 / LMG 1197) (Cupriavidus necator (strain JMP 134)).